The primary structure comprises 271 residues: Virulence regulon transcriptional activator VirF (271 aa).

Positions 167–265 constitute an HTH araC/xylS-type domain; it reads ERLQKFMEEN…GCTPSQARLT (99 aa). 2 DNA-binding regions (H-T-H motif) span residues 184–205 and 232–255; these read SKFA…GTVY and IVDI…RRRF.

In terms of biological role, transcriptional activator of the Yersinia virulence regulon. This is Virulence regulon transcriptional activator VirF (virF) from Yersinia enterocolitica serotype O:8 / biotype 1B (strain NCTC 13174 / 8081).